We begin with the raw amino-acid sequence, 241 residues long: Agamous-like MADS-box protein AGL8 homolog (241 aa).

Residues 3-57 form the MADS-box domain; sequence RGRVQLKRIENKINRQVTFSKRRSGLLKKAHEISVLCDAEVALVIFSSKGKLFEY. The 91-residue stretch at 88 to 178 folds into the K-box domain; it reads SENWVLEHAK…LKKIKEREKN (91 aa).

It localises to the nucleus. Its function is as follows. Probable transcription factor. This chain is Agamous-like MADS-box protein AGL8 homolog (AGL8), found in Sinapis alba (White mustard).